A 170-amino-acid polypeptide reads, in one-letter code: Adenine phosphoribosyltransferase (170 aa).

It belongs to the purine/pyrimidine phosphoribosyltransferase family. Homodimer.

It is found in the cytoplasm. The enzyme catalyses AMP + diphosphate = 5-phospho-alpha-D-ribose 1-diphosphate + adenine. It participates in purine metabolism; AMP biosynthesis via salvage pathway; AMP from adenine: step 1/1. Its function is as follows. Catalyzes a salvage reaction resulting in the formation of AMP, that is energically less costly than de novo synthesis. The sequence is that of Adenine phosphoribosyltransferase from Bacillus subtilis (strain 168).